We begin with the raw amino-acid sequence, 146 residues long: Large ribosomal subunit protein bL21 (146 aa).

Residues 117 to 146 are disordered; it reads ITIGKSAPKSSSKKETVKKETKPKSEKSTN. Positions 128–146 are enriched in basic and acidic residues; that stretch reads SKKETVKKETKPKSEKSTN.

The protein belongs to the bacterial ribosomal protein bL21 family. As to quaternary structure, part of the 50S ribosomal subunit. Contacts protein L20.

This protein binds to 23S rRNA in the presence of protein L20. The sequence is that of Large ribosomal subunit protein bL21 from Prochlorococcus marinus (strain MIT 9301).